A 555-amino-acid chain; its full sequence is Wee1-like protein kinase 2 (555 aa).

Residues 1 to 112 (MADTETDQGL…NFSTPKNSLG (112 aa)) form a disordered region. Position 15 is a phosphoserine; by CaMK2 and PKA (Ser15). Positions 26–41 (EGQMTAQDIGGAQSQK) are enriched in polar residues. The segment covering 57-72 (TRDELHTSLSRDKESP) has biased composition (basic and acidic residues). Ser71 carries the post-translational modification Phosphoserine. Residues 102–112 (TNFSTPKNSLG) are compositionally biased toward polar residues. Positions 167–169 (KRK) match the Nuclear localization signal motif. Residues 208–485 (FFEIEKIGVG…ARSRILWPFL (278 aa)) form the Protein kinase domain. ATP contacts are provided by residues 214–222 (IGVGEFGTV) and Lys237. A Nuclear export signal motif is present at residues 310–324 (KLKDILLQISLGLKY). Catalysis depends on Asp334, which acts as the Proton acceptor. Asn339 and Asp375 together coordinate Mg(2+). Residues 488-514 (TDELQKQLNLEKSKTATLKRELKKARH) are a coiled coil.

Belongs to the protein kinase superfamily. Ser/Thr protein kinase family. WEE1 subfamily. Phosphorylated by PKA at Ser-15 in vitro, leading to activate kinase activity. Phosphorylation at Ser-15 by CaMK2, leading to increase its activity and promote metaphase II exit during egg activation. Ovary-specific.

It is found in the cytoplasm. It localises to the nucleus. The enzyme catalyses L-tyrosyl-[protein] + ATP = O-phospho-L-tyrosyl-[protein] + ADP + H(+). Its function is as follows. Oocyte-specific protein tyrosine kinase that phosphorylates and inhibits CDK1 and acts as a key regulator of meiosis during both prophase I and metaphase II. Required to maintain meiotic arrest in oocytes during the germinal vesicle (GV) stage, a long period of quiescence at dictyate prophase I, by phosphorylating CDK1 at 'Tyr-15', leading to inhibit CDK1 activity and prevent meiotic reentry. Also required for metaphase II exit during egg activation by phosphorylating CDK1 at 'Tyr-15', to ensure exit from meiosis in oocytes and promote pronuclear formation. The polypeptide is Wee1-like protein kinase 2 (Wee2) (Mus musculus (Mouse)).